The chain runs to 155 residues: Cytochrome c oxidase subunit 4, mitochondrial (155 aa).

Residues 1–25 constitute a mitochondrion transit peptide; sequence MLSLRQSIRFFKPATRTLCSSRYLL. Thr-55 carries the post-translational modification Phosphothreonine. Zn(2+)-binding residues include Cys-111, His-119, Cys-134, and Cys-137.

Belongs to the cytochrome c oxidase subunit 5B family. In terms of assembly, component of the cytochrome c oxidase (complex IV, CIV), a multisubunit enzyme composed of 12 subunits. The complex is composed of a catalytic core of 3 subunits COX1, COX2 and COX3, encoded in the mitochondrial DNA, and 9 supernumerary subunits COX4, COX5A (or COX5B), COX6, COX7, COX8, COX9, COX12, COX13 and COX26, which are encoded in the nuclear genome. The complex exists as a monomer or a dimer and forms supercomplexes (SCs) in the inner mitochondrial membrane with a dimer of ubiquinol-cytochrome c oxidoreductase (cytochrome b-c1 complex, complex III, CIII), resulting in 2 different assemblies (supercomplexes III(2)IV and III(2)IV(2)).

The protein resides in the mitochondrion inner membrane. It functions in the pathway energy metabolism; oxidative phosphorylation. Its function is as follows. Component of the cytochrome c oxidase, the last enzyme in the mitochondrial electron transport chain which drives oxidative phosphorylation. The respiratory chain contains 3 multisubunit complexes succinate dehydrogenase (complex II, CII), ubiquinol-cytochrome c oxidoreductase (cytochrome b-c1 complex, complex III, CIII) and cytochrome c oxidase (complex IV, CIV), that cooperate to transfer electrons derived from NADH and succinate to molecular oxygen, creating an electrochemical gradient over the inner membrane that drives transmembrane transport and the ATP synthase. Cytochrome c oxidase is the component of the respiratory chain that catalyzes the reduction of oxygen to water. Electrons originating from reduced cytochrome c in the intermembrane space (IMS) are transferred via the dinuclear copper A center (CU(A)) of COX2 and heme A of COX1 to the active site in COX1, a binuclear center (BNC) formed by heme A3 and copper B (CU(B)). The BNC reduces molecular oxygen to 2 water molecules using 4 electrons from cytochrome c in the IMS and 4 protons from the mitochondrial matrix. The polypeptide is Cytochrome c oxidase subunit 4, mitochondrial (COX4) (Saccharomyces cerevisiae (strain ATCC 204508 / S288c) (Baker's yeast)).